Here is a 72-residue protein sequence, read N- to C-terminus: Conotoxin VnMKLT2-021 (72 aa).

Positions 1 to 22 (MKLTCVLIVAVLFLTACQLTTA) are cleaved as a signal peptide. A propeptide spanning residues 23–45 (ASYARSEREHPDLGSSDQNSKLT) is cleaved from the precursor. Residues 25–44 (YARSEREHPDLGSSDQNSKL) form a disordered region. 3 cysteine pairs are disulfide-bonded: cysteine 48/cysteine 62, cysteine 55/cysteine 66, and cysteine 61/cysteine 71.

This sequence belongs to the conotoxin O1 superfamily. In terms of tissue distribution, expressed by the venom duct.

It is found in the secreted. This is Conotoxin VnMKLT2-021 from Conus ventricosus (Mediterranean cone).